The sequence spans 261 residues: uncharacterized protein (261 aa).

Residues Met1–Ala20 form the signal peptide. Residues Asn22 and Asn27 are each glycosylated (N-linked (GlcNAc...) asparagine; by host).

The protein localises to the secreted. This is an uncharacterized protein from Acanthamoeba polyphaga (Amoeba).